The chain runs to 342 residues: MLKFIQNNREITALLAVVLLFVLPGFLDRQYLSVQTLTMVYSSAQILILLAMGATLVMLTRNIDVSVGSITGMCAVLLGMLLNAGYSLPVACVATLLLGLLAGFFNGVLVAWLKIPAIVATLGTLGLYRGIMLLWTGGKWIEGLPAELKQLSAPLLFGVSAIGWLTIILVAFMAWLLAKTAFGRSFYVTGDNLQGARQLGVRTEAIRIVAFSLNGCMAALAGIVFASQIGFIPNQTGTGLEMKAIAACVLGGISLLGGSGAIIGAVLGAWFLTQIDSVLVLLRIPAWWNDFIAGMVLLAVLVFDGRLRCALERNLRRQKYARFMMPPPPVKPASSGKKREAA.

Residues 1–13 lie on the Periplasmic side of the membrane; that stretch reads MLKFIQNNREITA. The chain crosses the membrane as a helical span at residues 14–34; sequence LLAVVLLFVLPGFLDRQYLSV. The Cytoplasmic portion of the chain corresponds to 35-38; sequence QTLT. Residues 39–59 form a helical membrane-spanning segment; the sequence is MVYSSAQILILLAMGATLVML. Topologically, residues 60 to 69 are periplasmic; the sequence is TRNIDVSVGS. A helical transmembrane segment spans residues 70–90; it reads ITGMCAVLLGMLLNAGYSLPV. At 91 to 92 the chain is on the cytoplasmic side; it reads AC. A helical membrane pass occupies residues 93–113; sequence VATLLLGLLAGFFNGVLVAWL. A topological domain (periplasmic) is located at residue Lys-114. A helical transmembrane segment spans residues 115–135; that stretch reads IPAIVATLGTLGLYRGIMLLW. Over 136–154 the chain is Cytoplasmic; that stretch reads TGGKWIEGLPAELKQLSAP. The helical transmembrane segment at 155-175 threads the bilayer; the sequence is LLFGVSAIGWLTIILVAFMAW. Over 176-212 the chain is Periplasmic; sequence LLAKTAFGRSFYVTGDNLQGARQLGVRTEAIRIVAFS. A helical transmembrane segment spans residues 213-233; it reads LNGCMAALAGIVFASQIGFIP. At 234–251 the chain is on the cytoplasmic side; sequence NQTGTGLEMKAIAACVLG. A helical membrane pass occupies residues 252–272; the sequence is GISLLGGSGAIIGAVLGAWFL. Residues 273-283 are Periplasmic-facing; the sequence is TQIDSVLVLLR. The chain crosses the membrane as a helical span at residues 284–304; it reads IPAWWNDFIAGMVLLAVLVFD. At 305–342 the chain is on the cytoplasmic side; that stretch reads GRLRCALERNLRRQKYARFMMPPPPVKPASSGKKREAA.

The protein belongs to the binding-protein-dependent transport system permease family. AraH/RbsC subfamily. As to quaternary structure, the complex is composed of two ATP-binding proteins (LsrA), two transmembrane proteins (LsrC and LsrD) and a solute-binding protein (LsrB).

It localises to the cell inner membrane. Functionally, part of the ABC transporter complex LsrABCD involved in autoinducer 2 (AI-2) import. Probably responsible for the translocation of the substrate across the membrane. The protein is Autoinducer 2 import system permease protein LsrC (lsrC) of Escherichia coli (strain SMS-3-5 / SECEC).